The sequence spans 633 residues: Rab11 family-interacting protein 4 (633 aa).

EF-hand domains lie at 17–52 (LFLQ…FAQG) and 50–85 (AQGD…MKGC). 7 residues coordinate Ca(2+): Asp-30, Asp-32, Asp-34, Asp-63, Asn-65, Arg-69, and Asp-74. Disordered stretches follow at residues 152–182 (SDLD…LGSL) and 218–257 (GEGE…QTPR). Residues 238 to 254 (TNALSDLGSSVPSSAGQ) are compositionally biased toward polar residues. The stretch at 410-613 (AREKGTEIVL…EEINYRLRQY (204 aa)) forms a coiled coil. Residues 570 to 632 (EAKSLFSTQT…DHNPSILEIK (63 aa)) enclose the FIP-RBD domain.

In terms of assembly, homodimer. Forms a complex with Rab11 (rab11a or rab11b) and arf6.

It localises to the recycling endosome membrane. The protein resides in the cleavage furrow. Its subcellular location is the midbody. It is found in the cytoplasmic vesicle. In terms of biological role, acts as a regulator of endocytic traffic by participating in membrane delivery. Required for the abscission step in cytokinesis, possibly by acting as an 'address tag' delivering recycling endosome membranes to the cleavage furrow during late cytokinesis. The chain is Rab11 family-interacting protein 4 (rab11fip4) from Xenopus tropicalis (Western clawed frog).